The sequence spans 922 residues: MHWLASATQTSASIVSSSLLSAVDVSSSLTMSEYFQNTSLPGTANSRQFSLPVVSNAAFLTGSISNFSRASAPAISSAWLQPSASGTSFQPLMGSAYLYQHSSTTMLSGVTGQSHICTSAASYPGVFEWDSTASTVKKSSSLRDFTVTVIDQNTAVSSMSMTAQYYKTSDTNTMVPLYPSLSASLVQGTLTQIPNQQGHNLSLPCQIGSQVYYYNQGTLGPQLSCLQSYGSVSYTGYRASAHQPEMVMVLKEVQPTNVLPPVSTSGMYYSVSSQPITETSVQVMETSLGMDTSLGLQSPSQTFCLPQTPEFSKSFSSRNTQTLESNPSPELGDISITPVQSPTNLLTLSPAPSQEKNENENLDEIKTNLSKPLDVHQILIGNQDPPLLPVEIPDIHPLLACIDPLGQEEQPGSENANLRNKSLSLEDQGIFENGIESSSDLADITTWVEDTYLPPIFSSLQDLDQPESPSAKKAKDTSAIKVNQVQEKSCVIKGHSDQVRKNKHKASEPIQGAPKAKIQPKNPECLLEREVVVGSATVSNSASVNKAKHSSNKPHKAASSRISKTKSHGQEKTKGNRKNSSKKSEESKQSGKKVKVEEKQTIPNMKRKKNQPELSQKTLKKPRSSLGMHMLESVQVFHALGKKIDMKTGFSSSRTLGSSSNTQNRQPFPALKPWLDIQHEGKGPEKIQVKAQKLDGSAEKECTSPSHSELPPPGKVKLIPLPFLTLDQPQARHVSRRPNPLASRRPAVAYPARPDSTNSAQSNAVNPSRPAPTNTSLTGPATPAQPISAKATQPSSANPTQPTVPQSAASRPSAYKTSSCSSLQREPVSTAVTSLRSLPKPQNQFLIQDFSLQPRPWRKPTVPEPVMSTPITEEQRPEREAMKRKAQQERENAAKYTSLGKVQFFIERERDMEIAEYYGYTI.

Disordered regions lie at residues 459 to 522, 539 to 627, 649 to 668, 692 to 835, and 856 to 879; these read SLQD…QPKN, SNSA…SSLG, GFSSSRTLGSSSNTQNRQPF, QKLD…VTSL, and PWRKPTVPEPVMSTPITEEQRPER. Positions 546 to 567 are enriched in basic residues; it reads KAKHSSNKPHKAASSRISKTKS. The span at 582–600 shows a compositional bias: basic and acidic residues; sequence KKSEESKQSGKKVKVEEKQ. Over residues 651–660 the composition is skewed to low complexity; the sequence is SSSRTLGSSS. The span at 692–702 shows a compositional bias: basic and acidic residues; the sequence is QKLDGSAEKEC. Polar residues-rich tracts occupy residues 755-779 and 790-824; these read DSTNSAQSNAVNPSRPAPTNTSLTG and KATQPSSANPTQPTVPQSAASRPSAYKTSSCSSLQ. A coiled-coil region spans residues 872 to 899; sequence TEEQRPEREAMKRKAQQERENAAKYTSL.

This is an uncharacterized protein from Homo sapiens (Human).